We begin with the raw amino-acid sequence, 336 residues long: Serpentine receptor class beta-15 (336 aa).

Helical transmembrane passes span 24–44 (LFIH…FVIF), 57–77 (FLFS…AIIS), 109–129 (IFMS…FIAM), 142–162 (LGPI…FFIY), 186–206 (FTFF…NSYL), 237–257 (VFVV…IMIL), and 276–296 (GAFT…AVYL).

This sequence belongs to the nematode receptor-like protein srb family.

It localises to the membrane. This Caenorhabditis elegans protein is Serpentine receptor class beta-15 (srb-15).